The sequence spans 380 residues: Apolipoprotein A-IV (380 aa).

An N-terminal signal peptide occupies residues 1–20; it reads MFLKAVVLSLALVAVTGAEA. 13 tandem repeats follow at residues 33-54, 60-81, 82-103, 115-136, 137-158, 159-180, 181-202, 203-224, 225-246, 247-268, 269-286, 287-308, and 309-330. The 13 X 22 AA approximate tandem repeats stretch occupies residues 33-330; the sequence is DYFSQLGNNA…QLDTLRQKLG (298 aa). Residues 361–380 are disordered; that stretch reads KESQAPALPAQEEMPVPLGG.

It belongs to the apolipoprotein A1/A4/E family. Homodimer. As to expression, secreted in plasma.

It is found in the secreted. Functionally, may have a role in chylomicrons and VLDL secretion and catabolism. Required for efficient activation of lipoprotein lipase by ApoC-II; potent activator of LCAT. Apoa-IV is a major component of HDL and chylomicrons. This is Apolipoprotein A-IV (APOA4) from Bos taurus (Bovine).